Consider the following 87-residue polypeptide: Small ribosomal subunit protein uS17 (87 aa).

The protein belongs to the universal ribosomal protein uS17 family. Part of the 30S ribosomal subunit.

Functionally, one of the primary rRNA binding proteins, it binds specifically to the 5'-end of 16S ribosomal RNA. The sequence is that of Small ribosomal subunit protein uS17 from Heliobacterium modesticaldum (strain ATCC 51547 / Ice1).